Reading from the N-terminus, the 281-residue chain is sn-glycerol-3-phosphate transport system permease protein UgpE (281 aa).

6 consecutive transmembrane segments (helical) span residues 14-34 (VMLIIGVLLILFPLYVAFVAA), 82-104 (VMAFAITVGKITVSMLSAYAIVY), 113-133 (FFWLIFLTLMLPVEVRIFPTI), 142-162 (LDSYTGLTLPLMASATATFLF), 188-210 (FWDIVLPLSKTNLAALFVITFIY), and 247-267 (WNQVMAAMILTLIPPVAVVLL). An ABC transmembrane type-1 domain is found at 77–268 (LFNSFVMAFA…IPPVAVVLLM (192 aa)).

This sequence belongs to the binding-protein-dependent transport system permease family. UgpAE subfamily. In terms of assembly, the complex is composed of two ATP-binding proteins (UgpC), two transmembrane proteins (UgpA and UgpE) and a solute-binding protein (UgpB).

It localises to the cell inner membrane. Part of the ABC transporter complex UgpBAEC involved in sn-glycerol-3-phosphate (G3P) import. Probably responsible for the translocation of the substrate across the membrane. The protein is sn-glycerol-3-phosphate transport system permease protein UgpE (ugpE) of Yersinia enterocolitica serotype O:8 / biotype 1B (strain NCTC 13174 / 8081).